The chain runs to 218 residues: Ras-related protein RABA1h (218 aa).

Residue 20–27 (GDSGVGKS) coordinates GTP. The Effector region motif lies at 42 to 50 (SRSTIGVEF). Residues 68–72 (DTAGQ), 126–129 (NKAD), and 156–157 (SA) each bind GTP. S-geranylgeranyl cysteine attachment occurs at residues C215 and C216.

Belongs to the small GTPase superfamily. Rab family.

It is found in the cell membrane. Intracellular vesicle trafficking and protein transport. This is Ras-related protein RABA1h (RABA1H) from Arabidopsis thaliana (Mouse-ear cress).